The sequence spans 437 residues: Protein farnesyltransferase subunit beta (437 aa).

PFTB repeat units follow at residues 123-164 (ATDV…CIIG), 174-215 (REKL…SLTN), 222-263 (FEGT…VILK), 270-312 (LKSL…PLLH), and 332-374 (QQAL…SIAQ). (2E,6E)-farnesyl diphosphate is bound by residues 248–251 (HGGY) and 291–294 (RCNK). Residues D297 and C299 each coordinate Zn(2+). 300–303 (YSFW) serves as a coordination point for (2E,6E)-farnesyl diphosphate. H362 contributes to the Zn(2+) binding site. S432 carries the phosphoserine modification. At T436 the chain carries Phosphothreonine.

Belongs to the protein prenyltransferase subunit beta family. As to quaternary structure, heterodimer of FNTA and FNTB. Zn(2+) is required as a cofactor.

It catalyses the reaction L-cysteinyl-[protein] + (2E,6E)-farnesyl diphosphate = S-(2E,6E)-farnesyl-L-cysteinyl-[protein] + diphosphate. Its function is as follows. Essential subunit of the farnesyltransferase complex. Catalyzes the transfer of a farnesyl moiety from farnesyl diphosphate to a cysteine at the fourth position from the C-terminus of several proteins having the C-terminal sequence Cys-aliphatic-aliphatic-X. This is Protein farnesyltransferase subunit beta (Fntb) from Mus musculus (Mouse).